The sequence spans 196 residues: Large ribosomal subunit protein bL25 (196 aa).

Belongs to the bacterial ribosomal protein bL25 family. CTC subfamily. In terms of assembly, part of the 50S ribosomal subunit; part of the 5S rRNA/L5/L18/L25 subcomplex. Contacts the 5S rRNA. Binds to the 5S rRNA independently of L5 and L18.

In terms of biological role, this is one of the proteins that binds to the 5S RNA in the ribosome where it forms part of the central protuberance. The polypeptide is Large ribosomal subunit protein bL25 (Bacteroides fragilis (strain ATCC 25285 / DSM 2151 / CCUG 4856 / JCM 11019 / LMG 10263 / NCTC 9343 / Onslow / VPI 2553 / EN-2)).